We begin with the raw amino-acid sequence, 2542 residues long: Highly reducing polyketide synthase (2542 aa).

The Ketosynthase family 3 (KS3) domain maps to 7 to 435 (PEPIAIVGMA…GANAHAILDA (429 aa)). Catalysis depends on for beta-ketoacyl synthase activity residues Cys-182, His-317, and His-357. One can recognise a Malonyl-CoA:ACP transacylase (MAT) domain in the interval 545-872 (FVFTGQGAQW…NLVGSLFLSG (328 aa)). Residues 927–1062 (HDLLGSRIPG…TTNETLRINS (136 aa)) form an N-terminal hotdog fold region. The region spanning 927–1224 (HDLLGSRIPG…FLSLETATKE (298 aa)) is the PKS/mFAS DH domain. His-959 functions as the Proton acceptor; for dehydratase activity in the catalytic mechanism. The segment at 1072-1224 (NKDSYVRRWY…FLSLETATKE (153 aa)) is C-terminal hotdog fold. Asp-1137 functions as the Proton donor; for dehydratase activity in the catalytic mechanism. Residues 1275-1574 (LTQLAIRSVV…AGADIMLDDY (300 aa)) form a methyltransferase (CMet) domain region. The tract at residues 1606–1634 (VNGTNGINSTNSVNVTNDTSGINDTNRMN) is disordered. The Enoyl reductase (ER) domain maps to 1866–2186 (GKANSFYFES…QGDSVGSVVL (321 aa)). Residues 2209-2389 (ASYLLVGCLG…QAMSMALGMI (181 aa)) enclose the Ketoreductase (KR) domain.

It depends on pantetheine 4'-phosphate as a cofactor.

Its pathway is antifungal biosynthesis. In terms of biological role, highly reducing polyketide synthase; part of the gene cluster that mediates the biosynthesis of the tetrahydropyranyl antifungal agent lanomycin that acts as an inhibitor of CYP51 and blocks the ergosterol biosynthesis. The biosynthesis probably begins with the formation of an hexaketide, followed by methionine mediated alkylation of C-2 and C-6, and methylation of the reduced C-3 oxygen, pyran forming reductive ring closure, oxygenation of C-4, beta-keto reduction, enoyl reduction and dehydration of the remaining oxygens, and finally, acylation with glycine to complete the biosynthesis. The chain is Highly reducing polyketide synthase from Pyrenophora dematioidea (Helminthosporium dematioideum).